The chain runs to 367 residues: UDP-N-acetylglucosamine--N-acetylmuramyl-(pentapeptide) pyrophosphoryl-undecaprenol N-acetylglucosamine transferase (367 aa).

UDP-N-acetyl-alpha-D-glucosamine is bound by residues 18-20 (TGG), Asn-130, Arg-170, Ser-196, Ile-252, 271-276 (ALTVSE), and Gln-297.

Belongs to the glycosyltransferase 28 family. MurG subfamily.

It is found in the cell inner membrane. The catalysed reaction is di-trans,octa-cis-undecaprenyl diphospho-N-acetyl-alpha-D-muramoyl-L-alanyl-D-glutamyl-meso-2,6-diaminopimeloyl-D-alanyl-D-alanine + UDP-N-acetyl-alpha-D-glucosamine = di-trans,octa-cis-undecaprenyl diphospho-[N-acetyl-alpha-D-glucosaminyl-(1-&gt;4)]-N-acetyl-alpha-D-muramoyl-L-alanyl-D-glutamyl-meso-2,6-diaminopimeloyl-D-alanyl-D-alanine + UDP + H(+). It functions in the pathway cell wall biogenesis; peptidoglycan biosynthesis. Its function is as follows. Cell wall formation. Catalyzes the transfer of a GlcNAc subunit on undecaprenyl-pyrophosphoryl-MurNAc-pentapeptide (lipid intermediate I) to form undecaprenyl-pyrophosphoryl-MurNAc-(pentapeptide)GlcNAc (lipid intermediate II). In Shewanella frigidimarina (strain NCIMB 400), this protein is UDP-N-acetylglucosamine--N-acetylmuramyl-(pentapeptide) pyrophosphoryl-undecaprenol N-acetylglucosamine transferase.